A 623-amino-acid polypeptide reads, in one-letter code: Glutamyl-tRNA(Gln) amidotransferase subunit E (623 aa).

Belongs to the GatB/GatE family. GatE subfamily. In terms of assembly, heterodimer of GatD and GatE.

The enzyme catalyses L-glutamyl-tRNA(Gln) + L-glutamine + ATP + H2O = L-glutaminyl-tRNA(Gln) + L-glutamate + ADP + phosphate + H(+). Its function is as follows. Allows the formation of correctly charged Gln-tRNA(Gln) through the transamidation of misacylated Glu-tRNA(Gln) in organisms which lack glutaminyl-tRNA synthetase. The reaction takes place in the presence of glutamine and ATP through an activated gamma-phospho-Glu-tRNA(Gln). The GatDE system is specific for glutamate and does not act on aspartate. The sequence is that of Glutamyl-tRNA(Gln) amidotransferase subunit E from Haloarcula marismortui (strain ATCC 43049 / DSM 3752 / JCM 8966 / VKM B-1809) (Halobacterium marismortui).